The sequence spans 203 residues: MAVIKGITPEQVAQICIGHYAGVDEVGRGPLIGNVVTAAVILDPNNPIEGLNDSKKLSEKKRELLFEQIQQKALSVSVGSATPAEIDELNILHATMLAMQRAVAGLNIKPTSVLVDGNRTPDFGVESHAIIKGDGLIDAISAASIIAKVVRDREMDALALQYPEYGFDKHKGYPTKAHFEALTQHGVLPEHRKSFRPVREALA.

The RNase H type-2 domain maps to 18 to 203 (GHYAGVDEVG…SFRPVREALA (186 aa)). A divalent metal cation-binding residues include Asp24, Glu25, and Asp116.

This sequence belongs to the RNase HII family. It depends on Mn(2+) as a cofactor. Mg(2+) is required as a cofactor.

The protein resides in the cytoplasm. The enzyme catalyses Endonucleolytic cleavage to 5'-phosphomonoester.. Functionally, endonuclease that specifically degrades the RNA of RNA-DNA hybrids. In Shewanella halifaxensis (strain HAW-EB4), this protein is Ribonuclease HII.